The chain runs to 725 residues: Polyribonucleotide nucleotidyltransferase (725 aa).

Residues aspartate 487 and aspartate 493 each coordinate Mg(2+). Residues 554–613 (PRIETMQIPTDKIREVIGTGGKVIREIVEKTGAKIDIQDTGVIKIASSDAKAIKAAYNWI) form the KH domain. The 69-residue stretch at 623 to 691 (GMIYDGTVVK…ERGKIRLSMK (69 aa)) folds into the S1 motif domain. The interval 697 to 725 (TGEDITEKLKAEREADRNRERQARQSAGE) is disordered. Over residues 701–719 (ITEKLKAEREADRNRERQA) the composition is skewed to basic and acidic residues.

The protein belongs to the polyribonucleotide nucleotidyltransferase family. It depends on Mg(2+) as a cofactor.

Its subcellular location is the cytoplasm. The catalysed reaction is RNA(n+1) + phosphate = RNA(n) + a ribonucleoside 5'-diphosphate. Its function is as follows. Involved in mRNA degradation. Catalyzes the phosphorolysis of single-stranded polyribonucleotides processively in the 3'- to 5'-direction. This Methylobacterium nodulans (strain LMG 21967 / CNCM I-2342 / ORS 2060) protein is Polyribonucleotide nucleotidyltransferase.